A 156-amino-acid chain; its full sequence is Arginine repressor (156 aa).

This sequence belongs to the ArgR family.

It is found in the cytoplasm. The protein operates within amino-acid biosynthesis; L-arginine biosynthesis [regulation]. In terms of biological role, regulates arginine biosynthesis genes. This is Arginine repressor from Shewanella baltica (strain OS223).